Reading from the N-terminus, the 114-residue chain is BolA-like protein DDB_G0274169 (114 aa).

The span at T88 to I98 shows a compositional bias: polar residues. The segment at T88 to K114 is disordered.

The protein belongs to the BolA/IbaG family.

The sequence is that of BolA-like protein DDB_G0274169 from Dictyostelium discoideum (Social amoeba).